The following is a 199-amino-acid chain: Proteasome subunit beta type-2 (199 aa).

It belongs to the peptidase T1B family. As to quaternary structure, the 26S proteasome consists of a 20S proteasome core and two 19S regulatory subunits. The 20S proteasome core is composed of 28 subunits that are arranged in four stacked rings, resulting in a barrel-shaped structure. The two end rings are each formed by seven alpha subunits, and the two central rings are each formed by seven beta subunits. The catalytic chamber with the active sites is on the inside of the barrel.

The protein resides in the cytoplasm. The protein localises to the nucleus. In terms of biological role, non-catalytic component of the proteasome, a multicatalytic proteinase complex which is characterized by its ability to cleave peptides with Arg, Phe, Tyr, Leu, and Glu adjacent to the leaving group at neutral or slightly basic pH. The proteasome has an ATP-dependent proteolytic activity. In Caenorhabditis elegans, this protein is Proteasome subunit beta type-2 (pbs-4).